Reading from the N-terminus, the 118-residue chain is Cell division protein FtsB (118 aa).

The Cytoplasmic portion of the chain corresponds to 1-3 (MRL). Residues 4–21 (LFLVLLVLLGLIQYPLWL) form a helical membrane-spanning segment. Over 22 to 118 (GKGGWFKVWD…PRPPATPPRR (97 aa)) the chain is Periplasmic. Residues 28 to 62 (KVWDLQRQVAEQRETNDGLRARNTALEAEVRDLAT) adopt a coiled-coil conformation. Residues 88 to 118 (LPPGTPLPSDNSTPQASALSKPRPPATPPRR) form a disordered region. Polar residues predominate over residues 95 to 105 (PSDNSTPQASA). Residues 109–118 (PRPPATPPRR) are compositionally biased toward pro residues.

This sequence belongs to the FtsB family. In terms of assembly, part of a complex composed of FtsB, FtsL and FtsQ.

The protein resides in the cell inner membrane. Functionally, essential cell division protein. May link together the upstream cell division proteins, which are predominantly cytoplasmic, with the downstream cell division proteins, which are predominantly periplasmic. The polypeptide is Cell division protein FtsB (Bordetella bronchiseptica (strain ATCC BAA-588 / NCTC 13252 / RB50) (Alcaligenes bronchisepticus)).